The chain runs to 461 residues: Divalent metal cation transporter MntH (461 aa).

Transmembrane regions (helical) follow at residues 56-76 (AMAFFGPGYLVAVGYMDPGNW), 89-109 (TLLAVALVSNIMAIVLQSLCA), 132-152 (AMVLWLLAEIAIIATDIAEVI), 160-180 (LIFGIPLELGVLITALDVFLI), 193-213 (ALVITLLGVIAVCFAIQLALA), 230-250 (IVTNPDMLYLALGILGATVMP), 285-305 (IALMFALLINASILILAAATF), 322-342 (LLAPLLGLAIAPTLFGVALLC), 378-398 (AIAIVPAAGVTIFYGDSGTGQ), 399-419 (LLILTQVVLSLQLSFAVFPLV), and 433-453 (SPLWLSAIAWLIAVVIAALNV).

Belongs to the NRAMP family.

Its subcellular location is the cell inner membrane. Functionally, h(+)-stimulated, divalent metal cation uptake system. The polypeptide is Divalent metal cation transporter MntH (Agrobacterium fabrum (strain C58 / ATCC 33970) (Agrobacterium tumefaciens (strain C58))).